A 130-amino-acid polypeptide reads, in one-letter code: Small ribosomal subunit protein uS9 (130 aa).

The interval alanine 110–arginine 130 is disordered. A compositionally biased stretch (basic residues) spans lysine 111–arginine 130.

This sequence belongs to the universal ribosomal protein uS9 family.

This Syntrophotalea carbinolica (strain DSM 2380 / NBRC 103641 / GraBd1) (Pelobacter carbinolicus) protein is Small ribosomal subunit protein uS9.